A 582-amino-acid polypeptide reads, in one-letter code: 15-cis-phytoene desaturase, chloroplastic/chromoplastic (582 aa).

A chloroplast and chromoplast-targeting transit peptide spans 1–110 (MPQIGLVSAV…FRSSPRPTKP (110 aa)). FAD-binding positions include 140 to 141 (EA), Lys-148, 165 to 166 (HI), and Tyr-171. Arg-306 serves as a coordination point for substrate. FAD is bound by residues Ile-348 and Asp-537. Position 545 (Ala-545) interacts with substrate. Residue Met-547 coordinates FAD.

The protein belongs to the carotenoid/retinoid oxidoreductase family. In terms of assembly, homotetramer. Requires FAD as cofactor.

The protein resides in the plastid. Its subcellular location is the chloroplast. It is found in the chromoplast. It localises to the membrane. It catalyses the reaction 2 a plastoquinone + 15-cis-phytoene = 9,9',15-tri-cis-zeta-carotene + 2 a plastoquinol. The protein operates within carotenoid biosynthesis; lycopene biosynthesis. Inhibited by the herbicides metflurazon, difunone, fluridone and diflufenican. Functionally, converts phytoene into zeta-carotene via the intermediary of phytofluene by the symmetrical introduction of two double bonds at the C-11 and C-11' positions of phytoene with a concomitant isomerization of two neighboring double bonds at the C9 and C9' positions from trans to cis. The chain is 15-cis-phytoene desaturase, chloroplastic/chromoplastic (PDS) from Capsicum annuum (Capsicum pepper).